The following is a 633-amino-acid chain: Carbon catabolite-derepressing protein kinase (633 aa).

Positions 1 to 16 are enriched in low complexity; the sequence is MSSNNNTNTAPANANS. Residues 1–46 are disordered; the sequence is MSSNNNTNTAPANANSSHHHHHHHHHHHHHGHGGSNSTLNNPKSSL. Residues 17–32 show a composition bias toward basic residues; that stretch reads SHHHHHHHHHHHHHGH. The Protein kinase domain maps to 55–306; sequence YQIVKTLGEG…IHEIMQDDWF (252 aa). ATP-binding positions include 61-69 and Lys-84; that span reads LGEGSFGKV. Asp-177 (proton acceptor) is an active-site residue. Phosphothreonine; by autocatalysis is present on Thr-210. Residues 313–392 form an auto-inhibitory domain (AID) region; the sequence is YLLPPDLKPH…YMLIKENKSL (80 aa). The disordered stretch occupies residues 317 to 345; the sequence is PDLKPHPEEENENNDSKKDGSSPDNDEID. Residues 319–337 show a composition bias toward basic and acidic residues; it reads LKPHPEEENENNDSKKDGS. One can recognise a UBA domain in the interval 348-389; sequence LVNILSSTMGYEKDEIYESLESSEDTPAFNEIRDAYMLIKEN. The tract at residues 409–434 is disordered; the sequence is FLSQSPPTFQQQSKSHQKSQVDHETA. A Phosphoserine modification is found at Ser-413. Lys-461 is covalently cross-linked (Glycyl lysine isopeptide (Lys-Gly) (interchain with G-Cter in ubiquitin)). Residue Ser-487 is modified to Phosphoserine. A Glycyl lysine isopeptide (Lys-Gly) (interchain with G-Cter in SUMO) cross-link involves residue Lys-549. Ser-632 is subject to Phosphoserine.

This sequence belongs to the protein kinase superfamily. CAMK Ser/Thr protein kinase family. SNF1 subfamily. In terms of assembly, component of the AMP-activated protein kinase complex also known as the SNF1 kinase complex (Snf1c), a heterotrimeric complex composed of an alpha subunit (SNF1), a regulatory subunit beta (GAL83 and substoichiometric alternate beta subunits SIP1 and SIP2), and a regulatory subunit gamma (SNF4). Interacts with the transcriptional activator SIP4. Interacts with SAK1. Interacts with CTK1: Interacts with adenylate cyclase CYR1. Phosphorylation at Thr-210 in response to glucose limitation leads to activation of kinase activity. ADP, but not AMP, protects the enzyme from dephosphorylation at Thr-210 by GLC7. Post-translationally, sumoylation by the SUMO (E3) ligase MMS21 leads to inhibition by interaction of SUMO attached to Lys-549 with a SUMO-interacting sequence motif located near the active site of SNF1, and by targeting SNF1 for glucose-induced destruction via the SLX5-SLX8 (SUMO-directed) ubiquitin ligase.

It is found in the cytoplasm. The protein localises to the nucleus. Its subcellular location is the nucleus membrane. It catalyses the reaction L-seryl-[protein] + ATP = O-phospho-L-seryl-[protein] + ADP + H(+). The enzyme catalyses L-threonyl-[protein] + ATP = O-phospho-L-threonyl-[protein] + ADP + H(+). With respect to regulation, the kinase activity is positively regulated by SNF4 via sequestration of the SNF1 auto-inhibitory domain (AID). In terms of biological role, serine/threonine protein kinase essential for release from glucose repression. Catalytic subunit of the AMP-activated protein kinase complex also known as the SNF1 kinase complex (Snf1c), a central regulator of cellular energy homeostasis, which, in response to a fall in intracellular ATP levels, activates energy-producing pathways and inhibits energy-consuming processes. The complex phosphorylates histone H3 to form H3S10ph, which promotes H3K14ac formation, leading to transcriptional activation through TBP recruitment to the promoters. The complex also negatively regulates the HOG1 MAPK pathway in ER stress response including unfolded protein response (UPR). Under nutrient/energy depletion, the complex phosphorylates and activates PAS kinase PSK1 which in turn activates PBS1, leading to the inhibition of the TORC1 signaling pathway. SNF1 also interacts and phosphorylates adenylate cyclase CYR1 and negatively regulates the protein kinase A signaling pathway. Also phosphorylates and regulates the transcriptional activator CAT8. The protein is Carbon catabolite-derepressing protein kinase of Saccharomyces cerevisiae (strain ATCC 204508 / S288c) (Baker's yeast).